Consider the following 148-residue polypeptide: Antitoxin Xre (148 aa).

The protein belongs to the MbcA/ParS/Xre antitoxin family. As to quaternary structure, homodimer. Forms a complex with cognate toxin Rse.

Its function is as follows. Antitoxin component of a type II toxin-antitoxin (TA) system. Neutralizes the NAD(+) depleting activity of cognate toxin Res. The sequence is that of Antitoxin Xre from Photorhabdus laumondii subsp. laumondii (strain DSM 15139 / CIP 105565 / TT01) (Photorhabdus luminescens subsp. laumondii).